The sequence spans 207 residues: Small ribosomal subunit protein uS4 (207 aa).

A disordered region spans residues 31 to 55; it reads KCKLDSKPGQHGRTSGARTSDYGTQ. Polar residues predominate over residues 42-53; that stretch reads GRTSGARTSDYG. In terms of domain architecture, S4 RNA-binding spans 97 to 157; that stretch reads SRLDNVVYRM…EQKKKQARIL (61 aa).

Belongs to the universal ribosomal protein uS4 family. In terms of assembly, part of the 30S ribosomal subunit. Contacts protein S5. The interaction surface between S4 and S5 is involved in control of translational fidelity.

Functionally, one of the primary rRNA binding proteins, it binds directly to 16S rRNA where it nucleates assembly of the body of the 30S subunit. In terms of biological role, with S5 and S12 plays an important role in translational accuracy. In Paraburkholderia xenovorans (strain LB400), this protein is Small ribosomal subunit protein uS4.